The following is a 630-amino-acid chain: ATP-dependent zinc metalloprotease FtsH 2 (630 aa).

Over 1–8 the chain is Cytoplasmic; it reads MNNNPNRR. The helical transmembrane segment at 9-29 threads the bilayer; it reads GSLIGPLFIYFILAMLIFMSI. Over 30–110 the chain is Periplasmic; that stretch reads SQLNTSNITE…YIQNTGASWW (81 aa). The helical transmembrane segment at 111–131 threads the bilayer; it reads VTMLIYMLPLIILMFFWFWMF. Residues 132–630 are Cytoplasmic-facing; the sequence is RRSGTGEGIP…KETNLFVSYA (499 aa). 203–210 contributes to the ATP binding site; that stretch reads GPPGTGKT. His425 is a binding site for Zn(2+). The active site involves Glu426. The Zn(2+) site is built by His429 and Asp502.

In the central section; belongs to the AAA ATPase family. The protein in the C-terminal section; belongs to the peptidase M41 family. Homohexamer. Zn(2+) serves as cofactor.

It is found in the cell inner membrane. Acts as a processive, ATP-dependent zinc metallopeptidase for both cytoplasmic and membrane proteins. Plays a role in the quality control of integral membrane proteins. This Petrotoga mobilis (strain DSM 10674 / SJ95) protein is ATP-dependent zinc metalloprotease FtsH 2.